The following is a 318-amino-acid chain: MTVMRGLLNGGRYGNRYIWTAISLRHPEVMEGNGLESAVMQWRRMLSNAGGAEAQVKEQKEEKKDAMVSNYWGISRPKITREDGSEWPWNCFMPWETYRSDLSIDLKKHHVPRTFMDKFAYRTVKILRVPTDIFFQRRYGCRAMMLETVAAVPGMVGGMLLHLKSLRKLEQSGGWIKALLEEAENERMHLMTMVELVQPKWYERLLVLAVQGVFFNSFFVLYVLSPKLAHRIVGYLEEEAIHSYTEYLKDIDSGAIKNIPAPAIAIDYWRLPKDATLKDVITVVRADEAHHRDVNHFASDVQVQGKELRDAPAPVGYH.

The transit peptide at 1 to 46 (MTVMRGLLNGGRYGNRYIWTAISLRHPEVMEGNGLESAVMQWRRML) directs the protein to the mitochondrion. Residues 143–163 (AMMLETVAAVPGMVGGMLLHL) traverse the membrane as a helical segment. Fe cation-binding residues include glutamate 147, glutamate 186, and histidine 189. The helical transmembrane segment at 205–225 (LLVLAVQGVFFNSFFVLYVLS) threads the bilayer. Fe cation-binding residues include glutamate 237, glutamate 288, and histidine 291.

The protein belongs to the alternative oxidase family. Homodimer; disulfide-linked. Fe cation is required as a cofactor.

It is found in the mitochondrion inner membrane. It carries out the reaction 2 a ubiquinol + O2 = 2 a ubiquinone + 2 H2O. Catalyzes the cyanide-resistant oxidation of ubiquinol and the reduction of molecular oxygen to water, but does not translocate protons and consequently is not linked to oxidative phosphorylation. May increase respiration when the cytochrome respiratory pathway is restricted, or in response to low temperatures. The chain is Ubiquinol oxidase, mitochondrial (AOMI 1) from Mangifera indica (Mango).